A 3396-amino-acid chain; its full sequence is Versican core protein (3396 aa).

The N-terminal stretch at 1–20 is a signal peptide; that stretch reads MFINIKSILWMCSTLIVTHA. Residues 21–146 form the Ig-like V-type domain; that stretch reads LHKVKVGKSP…EDTQDTVSLT (126 aa). 5 disulfides stabilise this stretch: Cys-44–Cys-130, Cys-172–Cys-243, Cys-196–Cys-217, Cys-270–Cys-345, and Cys-294–Cys-315. Asn-57 carries N-linked (GlcNAc...) asparagine glycosylation. Link domains follow at residues 150-245 and 251-347; these read VVFH…YCYV and DVFH…YCFK. Residue Asn-330 is glycosylated (N-linked (GlcNAc...) asparagine). Positions 348 to 1335 are GAG-alpha (glucosaminoglycan attachment domain); that stretch reads PKEATTIDLS…IIEVRENKTG (988 aa). Over residues 420 to 430 the composition is skewed to polar residues; that stretch reads ATKLPTPTGST. Disordered stretches follow at residues 420-439 and 603-622; these read ATKL…MDDY and STTV…MDDW. Asn-615 is a glycosylation site (N-linked (GlcNAc...) asparagine). Residue Ser-659 is glycosylated (O-linked (Xyl...) (chondroitin sulfate) serine). N-linked (GlcNAc...) asparagine glycosylation is found at Asn-782 and Asn-809. Disordered stretches follow at residues 807–829, 1126–1154, and 1277–1316; these read EDNT…LPPA, IGPK…TSSL, and REYF…PAST. A compositionally biased stretch (polar residues) spans 811–824; sequence TSKPLESTEPSASS. Low complexity predominate over residues 1143–1154; that stretch reads EGSSTTGFTSSL. 2 N-linked (GlcNAc...) asparagine glycosylation sites follow: Asn-1332 and Asn-1398. The tract at residues 1336–3089 is GAG-beta; the sequence is RMSDLSVIGH…VEGTAIYLPG (1754 aa). Disordered regions lie at residues 1420 to 1497 and 1510 to 1539; these read VPKD…SGGE and FESG…HTEP. Residues 1422-1433 show a composition bias toward basic and acidic residues; sequence KDPEAAEARRGQ. Residues Asn-1442 and Asn-1468 are each glycosylated (N-linked (GlcNAc...) asparagine). The span at 1469-1480 shows a compositional bias: low complexity; the sequence is ESTETTESLEVT. Residues 1517-1538 are compositionally biased toward basic and acidic residues; it reads KGAESVTERDTEVGHQAHEHTE. O-linked (Xyl...) (chondroitin sulfate) serine glycans are attached at residues Ser-1548 and Ser-1631. Residue Asn-1663 is glycosylated (N-linked (GlcNAc...) asparagine). 2 disordered regions span residues 1717–1737 and 1759–1789; these read STTV…TAST and PNVA…MTDS. The span at 1720–1729 shows a compositional bias: basic and acidic residues; the sequence is VEEKKRKEEE. The segment covering 1760–1781 has biased composition (polar residues); the sequence is NVATSSDSGTRKSFMSLTTPTQ. Asn-1898 is a glycosylation site (N-linked (GlcNAc...) asparagine). Ser-1935 and Ser-1959 each carry an O-linked (Xyl...) (chondroitin sulfate) serine glycan. Disordered regions lie at residues 1962–1994, 2107–2134, and 2168–2188; these read AAFR…STMV, RQEI…NSPA, and KEMK…PDAN. A compositionally biased stretch (low complexity) spans 1969–1978; that stretch reads TSPSTVPTSV. A compositionally biased stretch (acidic residues) spans 2111-2120; it reads ESETTSEEQI. Position 2116 is a phosphoserine; by FAM20C (Ser-2116). An N-linked (GlcNAc...) asparagine glycan is attached at Asn-2179. Residues Ser-2247 and Ser-2254 are each glycosylated (O-linked (Xyl...) (chondroitin sulfate) serine). Asn-2272, Asn-2280, Asn-2360, Asn-2385, and Asn-2392 each carry an N-linked (GlcNAc...) asparagine glycan. 4 disordered regions span residues 2371-2396, 2445-2473, 2493-2518, and 2598-2617; these read TSRP…ETTT, SATT…EVPS, SEQN…STDG, and DTEV…DDST. Polar residues-rich tracts occupy residues 2445–2461 and 2496–2513; these read SATT…TFVS and NKSS…VSYE. Asn-2496 is a glycosylation site (N-linked (GlcNAc...) asparagine). At Ser-2608 the chain carries Phosphoserine. Thr-2617 carries the phosphothreonine modification. N-linked (GlcNAc...) asparagine glycosylation occurs at Asn-2628. Ser-2722, Ser-2723, and Ser-2767 each carry an O-linked (Xyl...) (chondroitin sulfate) serine glycan. 2 disordered regions span residues 2834–2856 and 2881–2905; these read GSEA…DVGS and EEYL…EDDG. The segment covering 2896–2905 has biased composition (basic and acidic residues); sequence TKLEPSEDDG. Asn-2934 carries an N-linked (GlcNAc...) asparagine glycan. Residue Ser-2941 is glycosylated (O-linked (Xyl...) (chondroitin sulfate) serine). N-linked (GlcNAc...) asparagine glycosylation is present at Asn-3067. An EGF-like 1 domain is found at 3089–3125; the sequence is GPDRCKMNPCLNGGTCYPTETSYVCTCVPGYSGDQCE. 11 disulfides stabilise this stretch: Cys-3093–Cys-3104, Cys-3098–Cys-3113, Cys-3115–Cys-3124, Cys-3131–Cys-3142, Cys-3136–Cys-3151, Cys-3153–Cys-3162, Cys-3169–Cys-3180, Cys-3197–Cys-3289, Cys-3265–Cys-3281, Cys-3296–Cys-3339, and Cys-3325–Cys-3352. In terms of domain architecture, EGF-like 2; calcium-binding spans 3127 to 3163; it reads DFDECHSNPCRNGATCVDGFNTFRCLCLPSYVGALCE. One can recognise a C-type lectin domain in the interval 3176-3290; the sequence is FQGQCYKYFA…CNYHLTYTCK (115 aa). The 61-residue stretch at 3294 to 3354 folds into the Sushi domain; sequence VACGQPPVVE…WAIPKITCMN (61 aa). Asn-3369 and Asn-3379 each carry an N-linked (GlcNAc...) asparagine glycan. The segment covering 3371–3380 has biased composition (polar residues); the sequence is SSAKDNSINT. The disordered stretch occupies residues 3371–3396; that stretch reads SSAKDNSINTSKHDHRWSRRWQESRR.

The protein belongs to the aggrecan/versican proteoglycan family. Interacts with FBLN1. Post-translationally, phosphorylated by FAM20C in the extracellular medium. In terms of processing, proteolytically cleaved by ADAMTS5 and ADAMTS15 in the pericellular matrix surrounding myoblasts, facilitating myoblast contact and fusion which is required for skeletal muscle development and regeneration. Detected in placenta (at protein level). Detected in cerebrospinal fluid, fibroblasts and urine (at protein level). Expressed in the retina (at protein level). Cerebral white matter and plasma. Isoform V0: Expressed in normal brain, gliomas, medulloblastomas, schwannomas, neurofibromas, and meningiomas. Isoform V1: Expressed in normal brain, gliomas, medulloblastomas, schwannomas, neurofibromas, and meningiomas. Isoform V2: Restricted to normal brain and gliomas. Isoform V3: Found in all these tissues except medulloblastomas.

The protein resides in the secreted. The protein localises to the extracellular space. Its subcellular location is the extracellular matrix. It localises to the cell projection. It is found in the cilium. The protein resides in the photoreceptor outer segment. The protein localises to the interphotoreceptor matrix. Its function is as follows. May play a role in intercellular signaling and in connecting cells with the extracellular matrix. May take part in the regulation of cell motility, growth and differentiation. Binds hyaluronic acid. The chain is Versican core protein (VCAN) from Homo sapiens (Human).